The primary structure comprises 286 residues: MKITDHKLSEGIALTFRVPEGNIKHPLIILCHGFCGIRNVLLPCFANAFTEAGFATITFDYRGFGESDGERGRLVPAMQTEDIISVINWAEKQECIDNQRIGLWGTSLGGGHVFSARAQDQRVKCIVSQLAFADGDVLVTGEMNESERASFLSTLNKMAEKKKNTGKEMFVGVTRVLSDNESKVFFEKVKGQYPEMDIKIPFLTVMETLQYKPAESAAKVQCPVLIVIAGQDSVNPPEQGKALYDAVASGTKELYEEADACHYDIYEGAFFERVAAVQTQWFKKHL.

The region spanning 26–268 (PLIILCHGFC…DACHYDIYEG (243 aa)) is the AB hydrolase-1 domain.

It to E.coli YcjY.

This is an uncharacterized protein from Escherichia coli.